The sequence spans 227 residues: UPF0173 metal-dependent hydrolase BCE_4747 (227 aa).

This sequence belongs to the UPF0173 family.

The polypeptide is UPF0173 metal-dependent hydrolase BCE_4747 (Bacillus cereus (strain ATCC 10987 / NRS 248)).